A 740-amino-acid chain; its full sequence is Elongation factor 2 (740 aa).

Residues alanine 23–asparagine 264 enclose the tr-type G domain. GTP is bound by residues alanine 32 to threonine 39, aspartate 98 to histidine 102, and asparagine 152 to aspartate 155. Histidine 605 is modified (diphthamide).

The protein belongs to the TRAFAC class translation factor GTPase superfamily. Classic translation factor GTPase family. EF-G/EF-2 subfamily.

The protein resides in the cytoplasm. Its function is as follows. Catalyzes the GTP-dependent ribosomal translocation step during translation elongation. During this step, the ribosome changes from the pre-translocational (PRE) to the post-translocational (POST) state as the newly formed A-site-bound peptidyl-tRNA and P-site-bound deacylated tRNA move to the P and E sites, respectively. Catalyzes the coordinated movement of the two tRNA molecules, the mRNA and conformational changes in the ribosome. This Pyrobaculum aerophilum (strain ATCC 51768 / DSM 7523 / JCM 9630 / CIP 104966 / NBRC 100827 / IM2) protein is Elongation factor 2.